We begin with the raw amino-acid sequence, 473 residues long: Photosystem II CP43 reaction center protein (473 aa).

Positions 1-14 are excised as a propeptide; that stretch reads MKTLYSLRRFYPVE. The residue at position 15 (T15) is an N-acetylthreonine. T15 carries the phosphothreonine modification. Helical transmembrane passes span 69–93, 134–155, 178–200, 255–275, and 291–312; these read LFEVAHFVPEKPMYEQGLILLPHLA, LLGPETLEESFPFFGYVWKDRN, KALYFGGVYDTWAPGGGDVRKIT, KPFAWARRALVWSGEAYLSYS, and WFNNTAYPSEFYGPTGPEASQA. [CaMn4O5] cluster is bound at residue E367. The helical transmembrane segment at 447–471 threads the bilayer; the sequence is RARAAAAGFEKGIDRDFEPVLSMTP.

Belongs to the PsbB/PsbC family. PsbC subfamily. PSII is composed of 1 copy each of membrane proteins PsbA, PsbB, PsbC, PsbD, PsbE, PsbF, PsbH, PsbI, PsbJ, PsbK, PsbL, PsbM, PsbT, PsbX, PsbY, PsbZ, Psb30/Ycf12, at least 3 peripheral proteins of the oxygen-evolving complex and a large number of cofactors. It forms dimeric complexes. Binds multiple chlorophylls and provides some of the ligands for the Ca-4Mn-5O cluster of the oxygen-evolving complex. It may also provide a ligand for a Cl- that is required for oxygen evolution. PSII binds additional chlorophylls, carotenoids and specific lipids. is required as a cofactor.

Its subcellular location is the plastid. It is found in the chloroplast thylakoid membrane. In terms of biological role, one of the components of the core complex of photosystem II (PSII). It binds chlorophyll and helps catalyze the primary light-induced photochemical processes of PSII. PSII is a light-driven water:plastoquinone oxidoreductase, using light energy to abstract electrons from H(2)O, generating O(2) and a proton gradient subsequently used for ATP formation. This Populus trichocarpa (Western balsam poplar) protein is Photosystem II CP43 reaction center protein.